Here is a 541-residue protein sequence, read N- to C-terminus: CTP synthase (541 aa).

The interval 1–268 (MAKFIFITGG…AEIVCRRLGL (268 aa)) is amidoligase domain. Residue S13 participates in CTP binding. S13 is a binding site for UTP. Residues 14-19 (GLGKGI) and D71 each bind ATP. D71 and E141 together coordinate Mg(2+). Residues 148–150 (DIE), 189–194 (KTKPTQ), and K225 each bind CTP. UTP is bound by residues 189–194 (KTKPTQ) and K225. The region spanning 293–539 (EIALVGKYVA…IKAALEYRAG (247 aa)) is the Glutamine amidotransferase type-1 domain. L-glutamine is bound at residue G359. C386 functions as the Nucleophile; for glutamine hydrolysis in the catalytic mechanism. L-glutamine-binding positions include 387–390 (MGMQ), E410, and R467. Active-site residues include H512 and E514.

It belongs to the CTP synthase family. As to quaternary structure, homotetramer.

It carries out the reaction UTP + L-glutamine + ATP + H2O = CTP + L-glutamate + ADP + phosphate + 2 H(+). It catalyses the reaction L-glutamine + H2O = L-glutamate + NH4(+). The enzyme catalyses UTP + NH4(+) + ATP = CTP + ADP + phosphate + 2 H(+). Its pathway is pyrimidine metabolism; CTP biosynthesis via de novo pathway; CTP from UDP: step 2/2. Allosterically activated by GTP, when glutamine is the substrate; GTP has no effect on the reaction when ammonia is the substrate. The allosteric effector GTP functions by stabilizing the protein conformation that binds the tetrahedral intermediate(s) formed during glutamine hydrolysis. Inhibited by the product CTP, via allosteric rather than competitive inhibition. Catalyzes the ATP-dependent amination of UTP to CTP with either L-glutamine or ammonia as the source of nitrogen. Regulates intracellular CTP levels through interactions with the four ribonucleotide triphosphates. This is CTP synthase from Symbiobacterium thermophilum (strain DSM 24528 / JCM 14929 / IAM 14863 / T).